Consider the following 576-residue polypeptide: Low-affinity glucose transporter HXT4 (576 aa).

The interval 1 to 56 is disordered; the sequence is MSEEAAYQEDTAVQNTPADALSPVESDSNSALSTPSNKAERDDMKDFDENHEESNN. The Cytoplasmic portion of the chain corresponds to 1–66; the sequence is MSEEAAYQED…YVEIPKKPAS (66 aa). Residues 25 to 37 show a composition bias toward polar residues; sequence ESDSNSALSTPSN. Basic and acidic residues predominate over residues 38 to 54; sequence KAERDDMKDFDENHEES. A Glycyl lysine isopeptide (Lys-Gly) (interchain with G-Cter in ubiquitin) cross-link involves residue lysine 45. A helical transmembrane segment spans residues 67–87; that stretch reads AYVTVSICCLMVAFGGFVFGW. Residues 88–122 are Extracellular-facing; it reads DTGTISGFVAQTDFIRRFGMKHHDGTYYLSKVRTG. The chain crosses the membrane as a helical span at residues 123 to 143; it reads LIVSIFNIGCAIGGIILARLG. Residues 144 to 149 are Cytoplasmic-facing; the sequence is DMYGRK. Residues 150–170 traverse the membrane as a helical segment; that stretch reads MGLIVVVVIYIIGIIIQIASI. Residues 171-180 lie on the Extracellular side of the membrane; the sequence is NKWYQYFIGR. A helical membrane pass occupies residues 181 to 201; it reads IISGLGVGGIAVLSPMLISEV. At 202 to 207 the chain is on the cytoplasmic side; that stretch reads SPKHIR. Residues 208–228 form a helical membrane-spanning segment; sequence GTLVSCYQLMITLGIFLGYCT. Residues 229–242 lie on the Extracellular side of the membrane; it reads NYGTKTYTNSVQWR. The chain crosses the membrane as a helical span at residues 243-263; the sequence is VPLGLGFAWALFMIGGMTFVP. At 264–346 the chain is on the cytoplasmic side; the sequence is ESPRYLVEVG…IQSLQQLTGD (83 aa). Residues 347–363 traverse the membrane as a helical segment; the sequence is NYFFYYGTTVFTAVGLE. At 364-369 the chain is on the extracellular side; that stretch reads DSFETS. The helical transmembrane segment at 370 to 387 threads the bilayer; it reads IVLGIVNFASTFVGIFLV. Over 388–394 the chain is Cytoplasmic; it reads ERYGRRR. Residues 395–415 form a helical membrane-spanning segment; sequence CLLWGAASMTACMVVFASVGV. Over 416-437 the chain is Extracellular; it reads TRLWPNGKKNGSSKGAGNCMIV. Residue asparagine 425 is glycosylated (N-linked (GlcNAc...) asparagine). Residues 438 to 458 form a helical membrane-spanning segment; it reads FTCFYLFCFATTWAPIPFVVN. The Cytoplasmic segment spans residues 459-475; the sequence is SETFPLRVKSKCMAIAQ. Residues 476–496 form a helical membrane-spanning segment; it reads ACNWIWGFLIGFFTPFISGAI. Aspartate 497 is a topological domain (extracellular). Residues 498–518 traverse the membrane as a helical segment; the sequence is FYYGYVFMGCLVFSYFYVFFF. Topologically, residues 519 to 576 are cytoplasmic; that stretch reads VPETKGLTLEEVNTLWEEGVLPWKSPSWVPPNKRGTDYNADDLMHDDQPFYKKMFGKK.

Belongs to the major facilitator superfamily. Sugar transporter (TC 2.A.1.1) family.

The protein resides in the cell membrane. With respect to regulation, xylose uptake is strongly inhibited by glucose. Functionally, low-affinity glucose transporter. Can also transport xylose. The chain is Low-affinity glucose transporter HXT4 (HXT4) from Saccharomyces cerevisiae (strain YJM789) (Baker's yeast).